Reading from the N-terminus, the 201-residue chain is Small ribosomal subunit protein uS5 (201 aa).

A disordered region spans residues 1–28; sequence MARGEQQRGEGGQRRDRRDRNAPEERVD. The region spanning 31-94 is the S5 DRBM domain; the sequence is IVEKLVHINR…EEAKKTMIRV (64 aa). Residues 173–201 form a disordered region; the sequence is QIAAKRGKKVGDILGRRADGASAPEAIEG. Basic and acidic residues predominate over residues 181–191; sequence KVGDILGRRAD.

Belongs to the universal ribosomal protein uS5 family. In terms of assembly, part of the 30S ribosomal subunit. Contacts proteins S4 and S8.

With S4 and S12 plays an important role in translational accuracy. Functionally, located at the back of the 30S subunit body where it stabilizes the conformation of the head with respect to the body. The polypeptide is Small ribosomal subunit protein uS5 (Caulobacter vibrioides (strain ATCC 19089 / CIP 103742 / CB 15) (Caulobacter crescentus)).